A 422-amino-acid polypeptide reads, in one-letter code: Secernin-3 (422 aa).

A propeptide spanning residues M1 to S5 is cleaved from the precursor. C6 is an active-site residue. The residue at position 6 (C6) is a Glyoxylic acid (Cys); alternate. C6 is subject to Pyruvic acid (Cys); alternate.

The protein belongs to the peptidase C69 family. Secernin subfamily.

Its function is as follows. Plays a role in thermal nociception. In Bos taurus (Bovine), this protein is Secernin-3 (SCRN3).